The primary structure comprises 538 residues: Mitochondrial distribution and morphology protein 34 (538 aa).

An SMP-LTD domain is found at 1 to 224 (MSFRFDRSVF…LPTALFNMSQ (224 aa)). Disordered regions lie at residues 26 to 55 (ALNP…RKSG) and 231 to 251 (DGSR…NQPS).

Belongs to the MDM34 family. Component of the ER-mitochondria encounter structure (ERMES) or MDM complex, composed of MMM1, MDM10, MDM12 and MDM34.

It is found in the mitochondrion outer membrane. Component of the ERMES/MDM complex, which serves as a molecular tether to connect the endoplasmic reticulum (ER) and mitochondria. Components of this complex are involved in the control of mitochondrial shape and protein biogenesis, and function in nonvesicular lipid trafficking between the ER and mitochondria. MDM34 is required for the interaction of the ER-resident membrane protein MMM1 and the outer mitochondrial membrane-resident beta-barrel protein MDM10. The chain is Mitochondrial distribution and morphology protein 34 from Candida glabrata (strain ATCC 2001 / BCRC 20586 / JCM 3761 / NBRC 0622 / NRRL Y-65 / CBS 138) (Yeast).